A 302-amino-acid polypeptide reads, in one-letter code: Oxygen-dependent coproporphyrinogen-III oxidase (302 aa).

Residue Ser-94 coordinates substrate. Residues His-98 and His-108 each coordinate a divalent metal cation. The active-site Proton donor is the His-108. Position 110-112 (110-112 (NVR)) interacts with substrate. A divalent metal cation contacts are provided by His-147 and His-177. Residues 242-277 (YVEFNLVYDRGTIFGLQSGGRTESILMSLPPLVRWD) are important for dimerization. Residue 260–262 (GGR) coordinates substrate.

This sequence belongs to the aerobic coproporphyrinogen-III oxidase family. Homodimer. Requires a divalent metal cation as cofactor.

Its subcellular location is the cytoplasm. The catalysed reaction is coproporphyrinogen III + O2 + 2 H(+) = protoporphyrinogen IX + 2 CO2 + 2 H2O. It functions in the pathway porphyrin-containing compound metabolism; protoporphyrin-IX biosynthesis; protoporphyrinogen-IX from coproporphyrinogen-III (O2 route): step 1/1. Involved in the heme biosynthesis. Catalyzes the aerobic oxidative decarboxylation of propionate groups of rings A and B of coproporphyrinogen-III to yield the vinyl groups in protoporphyrinogen-IX. The protein is Oxygen-dependent coproporphyrinogen-III oxidase of Alcanivorax borkumensis (strain ATCC 700651 / DSM 11573 / NCIMB 13689 / SK2).